The following is a 142-amino-acid chain: Large ribosomal subunit protein uL16 (142 aa).

It belongs to the universal ribosomal protein uL16 family. Part of the 50S ribosomal subunit.

Binds 23S rRNA and is also seen to make contacts with the A and possibly P site tRNAs. This Fervidobacterium nodosum (strain ATCC 35602 / DSM 5306 / Rt17-B1) protein is Large ribosomal subunit protein uL16.